A 368-amino-acid chain; its full sequence is 2-aminoethylphosphonate--pyruvate transaminase (368 aa).

N6-(pyridoxal phosphate)lysine is present on Lys-192.

This sequence belongs to the class-V pyridoxal-phosphate-dependent aminotransferase family. PhnW subfamily. Homodimer. Requires pyridoxal 5'-phosphate as cofactor.

It carries out the reaction (2-aminoethyl)phosphonate + pyruvate = phosphonoacetaldehyde + L-alanine. In terms of biological role, involved in phosphonate degradation. In Pseudomonas putida (strain W619), this protein is 2-aminoethylphosphonate--pyruvate transaminase.